Here is a 117-residue protein sequence, read N- to C-terminus: Immunoglobulin kappa variable 1-5 (117 aa).

The first 22 residues, 1–22 (MDMRVPAQLLGLLLLWLPGAKC), serve as a signal peptide directing secretion. Positions 23–45 (DIQMTQSPSTLSASVGDRVTITC) are framework-1. In terms of domain architecture, Ig-like spans 24 to 117 (IQMTQSPSTL…YYCQQYNSYS (94 aa)). An intrachain disulfide couples Cys-45 to Cys-110. The interval 46-56 (RASQSISSWLA) is complementarity-determining-1. The tract at residues 57–71 (WYQQKPGKAPKLLIY) is framework-2. A complementarity-determining-2 region spans residues 72–78 (KASSLES). A framework-3 region spans residues 79–110 (GVPSRFSGSGSGTEFTLTISSLQPDDFATYYC). The interval 111 to 117 (QQYNSYS) is complementarity-determining-3.

As to quaternary structure, immunoglobulins are composed of two identical heavy chains and two identical light chains; disulfide-linked.

It is found in the secreted. It localises to the cell membrane. Its function is as follows. V region of the variable domain of immunoglobulin light chains that participates in the antigen recognition. Immunoglobulins, also known as antibodies, are membrane-bound or secreted glycoproteins produced by B lymphocytes. In the recognition phase of humoral immunity, the membrane-bound immunoglobulins serve as receptors which, upon binding of a specific antigen, trigger the clonal expansion and differentiation of B lymphocytes into immunoglobulins-secreting plasma cells. Secreted immunoglobulins mediate the effector phase of humoral immunity, which results in the elimination of bound antigens. The antigen binding site is formed by the variable domain of one heavy chain, together with that of its associated light chain. Thus, each immunoglobulin has two antigen binding sites with remarkable affinity for a particular antigen. The variable domains are assembled by a process called V-(D)-J rearrangement and can then be subjected to somatic hypermutations which, after exposure to antigen and selection, allow affinity maturation for a particular antigen. This is Immunoglobulin kappa variable 1-5 from Homo sapiens (Human).